The primary structure comprises 403 residues: High affinity transport system protein p37 (403 aa).

Positions 1–23 (MLKKLKNFILFSSIFSPIAFAIS) are cleaved as a signal peptide. Cys-24 carries N-palmitoyl cysteine lipidation. A lipid anchor (S-diacylglycerol cysteine) is attached at Cys-24.

The protein resides in the cell membrane. Its function is as follows. P37 is part of a high-affinity transport system. The chain is High affinity transport system protein p37 (p37) from Mesomycoplasma hyorhinis (Mycoplasma hyorhinis).